We begin with the raw amino-acid sequence, 217 residues long: ATP phosphoribosyltransferase (217 aa).

The protein belongs to the ATP phosphoribosyltransferase family. Short subfamily. Heteromultimer composed of HisG and HisZ subunits.

It is found in the cytoplasm. The catalysed reaction is 1-(5-phospho-beta-D-ribosyl)-ATP + diphosphate = 5-phospho-alpha-D-ribose 1-diphosphate + ATP. It functions in the pathway amino-acid biosynthesis; L-histidine biosynthesis; L-histidine from 5-phospho-alpha-D-ribose 1-diphosphate: step 1/9. Functionally, catalyzes the condensation of ATP and 5-phosphoribose 1-diphosphate to form N'-(5'-phosphoribosyl)-ATP (PR-ATP). Has a crucial role in the pathway because the rate of histidine biosynthesis seems to be controlled primarily by regulation of HisG enzymatic activity. This is ATP phosphoribosyltransferase from Burkholderia vietnamiensis (strain G4 / LMG 22486) (Burkholderia cepacia (strain R1808)).